Here is a 222-residue protein sequence, read N- to C-terminus: Pyridoxine/pyridoxamine 5'-phosphate oxidase (222 aa).

Residues R11–Y14 and K79 each bind substrate. FMN-binding positions include R74–K79, Y89–T90, K96, and Q118. Substrate is bound by residues Y136, R140, and S144. FMN-binding positions include Q153–S154 and W199. R205 to H207 is a binding site for substrate. R209 lines the FMN pocket.

Belongs to the pyridoxamine 5'-phosphate oxidase family. Homodimer. FMN serves as cofactor.

The catalysed reaction is pyridoxamine 5'-phosphate + O2 + H2O = pyridoxal 5'-phosphate + H2O2 + NH4(+). The enzyme catalyses pyridoxine 5'-phosphate + O2 = pyridoxal 5'-phosphate + H2O2. It participates in cofactor metabolism; pyridoxal 5'-phosphate salvage; pyridoxal 5'-phosphate from pyridoxamine 5'-phosphate: step 1/1. It functions in the pathway cofactor metabolism; pyridoxal 5'-phosphate salvage; pyridoxal 5'-phosphate from pyridoxine 5'-phosphate: step 1/1. In terms of biological role, catalyzes the oxidation of either pyridoxine 5'-phosphate (PNP) or pyridoxamine 5'-phosphate (PMP) into pyridoxal 5'-phosphate (PLP). The chain is Pyridoxine/pyridoxamine 5'-phosphate oxidase from Mycolicibacterium vanbaalenii (strain DSM 7251 / JCM 13017 / BCRC 16820 / KCTC 9966 / NRRL B-24157 / PYR-1) (Mycobacterium vanbaalenii).